Here is a 248-residue protein sequence, read N- to C-terminus: 14-3-3 protein homolog 2 (248 aa).

This sequence belongs to the 14-3-3 family.

This Echinococcus multilocularis (Fox tapeworm) protein is 14-3-3 protein homolog 2.